The primary structure comprises 159 residues: Cytochrome c-type biogenesis protein CcmE (159 aa).

Residues 1–8 lie on the Cytoplasmic side of the membrane; sequence MNPRRKKR. The helical; Signal-anchor for type II membrane protein transmembrane segment at 9 to 29 threads the bilayer; it reads LLVIVAVLFGIGASIGLVLYA. Over 30–159 the chain is Periplasmic; sequence LQENINLFYT…KPKYNLDSGN (130 aa). Heme contacts are provided by histidine 130 and tyrosine 134.

It belongs to the CcmE/CycJ family.

Its subcellular location is the cell inner membrane. Its function is as follows. Heme chaperone required for the biogenesis of c-type cytochromes. Transiently binds heme delivered by CcmC and transfers the heme to apo-cytochromes in a process facilitated by CcmF and CcmH. The chain is Cytochrome c-type biogenesis protein CcmE from Pseudoalteromonas translucida (strain TAC 125).